A 309-amino-acid polypeptide reads, in one-letter code: Ornithine carbamoyltransferase (309 aa).

Carbamoyl phosphate contacts are provided by residues 57–60 (STRT), Gln84, Arg108, and 135–138 (HPCQ). Residues Asn166, Asp226, and 230 to 231 (SM) each bind L-ornithine. Residues 265–266 (CL) and Arg293 each bind carbamoyl phosphate.

The protein belongs to the aspartate/ornithine carbamoyltransferase superfamily. OTCase family.

It is found in the cytoplasm. The enzyme catalyses carbamoyl phosphate + L-ornithine = L-citrulline + phosphate + H(+). It functions in the pathway amino-acid biosynthesis; L-arginine biosynthesis; L-arginine from L-ornithine and carbamoyl phosphate: step 1/3. Reversibly catalyzes the transfer of the carbamoyl group from carbamoyl phosphate (CP) to the N(epsilon) atom of ornithine (ORN) to produce L-citrulline. In Rhizorhabdus wittichii (strain DSM 6014 / CCUG 31198 / JCM 15750 / NBRC 105917 / EY 4224 / RW1) (Sphingomonas wittichii), this protein is Ornithine carbamoyltransferase.